A 93-amino-acid chain; its full sequence is YcgL domain-containing protein AHA_2135 (93 aa).

One can recognise a YcgL domain in the interval 1–85 (MLCAVYKSRK…PPENLLEQHK (85 aa)).

This is YcgL domain-containing protein AHA_2135 from Aeromonas hydrophila subsp. hydrophila (strain ATCC 7966 / DSM 30187 / BCRC 13018 / CCUG 14551 / JCM 1027 / KCTC 2358 / NCIMB 9240 / NCTC 8049).